A 209-amino-acid polypeptide reads, in one-letter code: Probable glutathione peroxidase 8-A (209 aa).

Residues 18–40 (VSVVFLSMLLCTGILCVLQLGFL) traverse the membrane as a helical segment. Cys-79 is a catalytic residue.

This sequence belongs to the glutathione peroxidase family.

Its subcellular location is the membrane. It carries out the reaction 2 glutathione + H2O2 = glutathione disulfide + 2 H2O. The protein is Probable glutathione peroxidase 8-A (gpx8-a) of Xenopus laevis (African clawed frog).